We begin with the raw amino-acid sequence, 194 residues long: dTTP/UTP pyrophosphatase (194 aa).

The active-site Proton acceptor is Asp73.

Belongs to the Maf family. YhdE subfamily. Requires a divalent metal cation as cofactor.

Its subcellular location is the cytoplasm. It catalyses the reaction dTTP + H2O = dTMP + diphosphate + H(+). The catalysed reaction is UTP + H2O = UMP + diphosphate + H(+). In terms of biological role, nucleoside triphosphate pyrophosphatase that hydrolyzes dTTP and UTP. May have a dual role in cell division arrest and in preventing the incorporation of modified nucleotides into cellular nucleic acids. The protein is dTTP/UTP pyrophosphatase of Clostridium botulinum (strain 657 / Type Ba4).